The chain runs to 177 residues: Ribosome maturation factor RimP (177 aa).

Basic and acidic residues predominate over residues 153–171; it reads VEFNRKDTKNDNQTEHDNK. The interval 153–177 is disordered; it reads VEFNRKDTKNDNQTEHDNKTEEEEA.

It belongs to the RimP family.

It is found in the cytoplasm. Functionally, required for maturation of 30S ribosomal subunits. This is Ribosome maturation factor RimP from Streptomyces coelicolor (strain ATCC BAA-471 / A3(2) / M145).